The sequence spans 176 residues: Endoribonuclease YbeY (176 aa).

Zn(2+) contacts are provided by histidine 138, histidine 142, and histidine 148.

The protein belongs to the endoribonuclease YbeY family. The cofactor is Zn(2+).

Its subcellular location is the cytoplasm. Single strand-specific metallo-endoribonuclease involved in late-stage 70S ribosome quality control and in maturation of the 3' terminus of the 16S rRNA. The chain is Endoribonuclease YbeY from Trichormus variabilis (strain ATCC 29413 / PCC 7937) (Anabaena variabilis).